The primary structure comprises 339 residues: Annexin A2 (339 aa).

Ser2 carries the N-acetylserine modification. The segment at 2–24 (STVHEILCKLSLEGDHSTPPSAY) is S100A10-binding site. Tyr24 carries the phosphotyrosine; by SRC modification. Ser26 is modified (phosphoserine; by PKC). Annexin repeat units follow at residues 33 to 104 (FDAE…GLLK) and 105 to 176 (TPAQ…ALAK). Lys49 bears the N6-acetyllysine; alternate mark. Lys49 is covalently cross-linked (Glycyl lysine isopeptide (Lys-Gly) (interchain with G-Cter in SUMO1); alternate). Lys49 participates in a covalent cross-link: Glycyl lysine isopeptide (Lys-Gly) (interchain with G-Cter in SUMO2); alternate. Residue Lys152 is modified to N6-acetyllysine. Ser184 is modified (phosphoserine). Annexin repeat units follow at residues 189 to 261 (ELID…NLVQ) and 265 to 336 (NKPL…YLCG). Residue Tyr199 is modified to Phosphotyrosine. Lys227 carries the N6-acetyllysine modification.

Belongs to the annexin family. In terms of assembly, heterotetramer containing 2 light chains of S100A10/p11 and 2 heavy chains of ANXA2/p36. Interacts with ATP1B1. Interacts with DYSF. Interacts with COCH. Interacts (via repeat Annexin 1) with PCSK9 (via the C-terminal domain); the interaction inhibits the degradation of LDLR. Interacts with CEACAM1 (via the cytoplasmic domain); this interaction is regulated by phosphorylation of CEACAM1. Interacts with APPL2 and APPL1; targets APPL2 to endosomes and acting in parallel to RAB5A. Interacts with S100A4. May interact with UBAP2. Interacts with PLEKHG4B; this interaction is required for PLEKHG4B localization to cell-cell adhesions. Interacts with FAM13A. Interacts with salivary cystatin-L2 (via loop 2) from the tick Ixodes scapularis; the interaction results in reduced activation of mouse NLRC4 inflammasome formation upon Anaplasma phagocytophilum infection. ISGylated.

Its subcellular location is the secreted. It localises to the extracellular space. The protein localises to the extracellular matrix. The protein resides in the basement membrane. It is found in the melanosome. Its subcellular location is the early endosome. Its function is as follows. Calcium-regulated membrane-binding protein whose affinity for calcium is greatly enhanced by anionic phospholipids. It binds two calcium ions with high affinity. May be involved in heat-stress response. Inhibits PCSK9-enhanced LDLR degradation, probably reduces PCSK9 protein levels via a translational mechanism but also competes with LDLR for binding with PCSK9. Binds to endosomes damaged by phagocytosis of particulate wear debris and participates in endosomal membrane stabilization, thereby limiting NLRP3 inflammasome activation. Required for endothelial cell surface plasmin generation and may support fibrinolytic surveillance and neoangiogenesis. Functionally, (Microbial infection) Regulates the formation of the NLRC4 inflammasome triggered by Anaplasma phagocytophilum infection. In terms of biological role, (Microbial infection) Protects against Klebsiella pneumoniae infection. Attenuates bacteria-induced pulmonary inflammation and promotes intro-abdominal pathogen clearance. Promotes anti-inflammatory responses by facilitating TLR4 internalization and translocation into early endosomal membranes; this leads to activation of TRAM-dependent endosomal signaling and release of anti-inflammatory cytokines. (Microbial infection) Promotes macrophage phagocytic efficiency towards Cryptococcus neoformans and ability to control fungal infection inside the cells. Its function is as follows. (Microbial infection) Contributes to protection against Pseudomonas aeruginosa infection by regulating autophagy via the AKT1-mTOR-ULK1/2 signaling pathway and activation of Rho GTPases via FAM13A-mediated mechanism. The sequence is that of Annexin A2 (Anxa2) from Mus musculus (Mouse).